Consider the following 371-residue polypeptide: Cytochrome b (371 aa).

4 helical membrane passes run 25–45, 69–90, 105–125, and 170–190; these read FGSMLLTCLMLQVLTGFFLAI, WIMQNTHAIGASLFFICIYIHI, WLSGVTLLMTLMATAFFGYVL, and FCALHFILPFIIISLSSIHII. His75 and His89 together coordinate heme b. Heme b contacts are provided by His174 and His188. Residue His193 participates in a ubiquinone binding. 4 helical membrane passes run 218–238, 280–300, 312–332, and 339–358; these read YKDFMTTTSMIILLPISLSVS, LGGTLALLMSILILTLPPFTH, LSQTLFWTLIATFVMITWTAT, and FITISQLTSIFYFSFFIMNP.

The protein belongs to the cytochrome b family. In terms of assembly, the cytochrome bc1 complex contains 3 respiratory subunits (MT-CYB, CYC1 and UQCRFS1), 2 core proteins (UQCRC1 and UQCRC2) and probably 6 low-molecular weight proteins. Heme b serves as cofactor.

The protein localises to the mitochondrion inner membrane. Functionally, component of the ubiquinol-cytochrome c reductase complex (complex III or cytochrome b-c1 complex) that is part of the mitochondrial respiratory chain. The b-c1 complex mediates electron transfer from ubiquinol to cytochrome c. Contributes to the generation of a proton gradient across the mitochondrial membrane that is then used for ATP synthesis. The chain is Cytochrome b (MT-CYB) from Micrurus tener microgalbineus (Spotted coral snake).